A 432-amino-acid chain; its full sequence is Casein kinase II subunit alpha-4, chloroplastic (432 aa).

Residues 1-55 (MALRPCTGFTISSLRNASAANNNLFSLLSFSSSSPAKRNLLLSSLQDNLRRFASS) constitute a chloroplast transit peptide. The tract at residues 63–83 (LRNQQQQHQQQQQSRVKEKSE) is disordered. Residues 66-75 (QQQQHQQQQQ) are compositionally biased toward low complexity. The 286-residue stretch at 132 to 417 (YEVVRKVGRG…AKEAMAHPYF (286 aa)) folds into the Protein kinase domain. Residues 138-146 (VGRGKYSEV) and K161 each bind ATP. The active-site Proton acceptor is the D249.

It belongs to the protein kinase superfamily. Ser/Thr protein kinase family. CK2 subfamily. As to quaternary structure, tetramer of two alpha and two beta chains. As to expression, expressed in root tips, lateral root primordia, cotyledons, leaf primordia, sepals, filaments, stigma, and anthers.

Its subcellular location is the plastid. The protein localises to the chloroplast. It catalyses the reaction L-seryl-[protein] + ATP = O-phospho-L-seryl-[protein] + ADP + H(+). It carries out the reaction L-threonyl-[protein] + ATP = O-phospho-L-threonyl-[protein] + ADP + H(+). In terms of biological role, casein kinases are operationally defined by their preferential utilization of acidic proteins such as caseins as substrates. The alpha chain contains the catalytic site. Involved in the regulation of various developmental processes. Involved in the regulation of plant growth and flowering time. Involved in retrograde signaling in plant responses to abscisic acid (ABA) and heat stress. May act as an enhancing factor in abiotic stress signaling through modulation of the expression of some molecular players in retrograde signaling. Phosphorylates RuBisCo activase (RCA) at Thr-78. This chain is Casein kinase II subunit alpha-4, chloroplastic, found in Arabidopsis thaliana (Mouse-ear cress).